The sequence spans 458 residues: 5'-adenylylsulfate reductase 3, chloroplastic (458 aa).

The segment at 1–24 (MALAINVSSSSSSAISSSSFPSSD) is disordered. The transit peptide at 1-69 (MALAINVSSS…VQSITKESIV (69 aa)) directs the protein to the chloroplast. Low complexity predominate over residues 8-23 (SSSSSSAISSSSFPSS). The segment at 70–319 (ASEVTEKLDV…KAKECGLHKG (250 aa)) is reductase domain. The Thioredoxin domain maps to 337–458 (ASVADIFNSE…SLTSFLNLVR (122 aa)). Active-site nucleophile residues include Cys-378 and Cys-381. Cys-378 and Cys-381 are oxidised to a cystine.

Belongs to the APS reductase family. [4Fe-4S] cluster is required as a cofactor. Leaves, roots and stem.

The protein localises to the plastid. It localises to the chloroplast. The enzyme catalyses glutathione disulfide + sulfite + AMP + 2 H(+) = adenosine 5'-phosphosulfate + 2 glutathione. With respect to regulation, stimulated by sodium sulfate &gt; ammonium sulfate. In terms of biological role, reduces sulfate for Cys biosynthesis. Substrate preference is adenosine-5'-phosphosulfate (APS) &gt;&gt; 3'-phosphoadenosine-5'-phosphosulfate (PAPS). Uses glutathione or DTT as source of protons. The protein is 5'-adenylylsulfate reductase 3, chloroplastic (APR3) of Arabidopsis thaliana (Mouse-ear cress).